Consider the following 607-residue polypeptide: Inactive metallocarboxypeptidase ECM14 (607 aa).

The N-terminal stretch at 1–21 is a signal peptide; the sequence is MRLFTHGQVLALLAFVNTISA. A propeptide spanning residues 22 to 174 is cleaved from the precursor; the sequence is IPSFSTNSYP…QTIYESYPSP (153 aa). Positions 202-522 constitute a Peptidase M14 domain; sequence NYQPLSVIVP…NAVMMLGRFL (321 aa). Residues H264 and E267 each contribute to the Zn(2+) site. Residues 264–267, R322, and 339–340 each bind substrate; these read HARE and DR. C333 and C356 are disulfide-bonded. N349 carries an N-linked (GlcNAc...) asparagine glycan. H396 is a Zn(2+) binding site. 397 to 398 contributes to the substrate binding site; it reads SY. Positions 539-607 are disordered; sequence QRPNKDDKPI…GWGFRRLRKR (69 aa). Residues 550–571 are compositionally biased toward acidic residues; sequence NDDDDDDNDDDDDDDDDADTND. The span at 573 to 590 shows a compositional bias: basic and acidic residues; the sequence is GIGRKDDSWVPDEYKGDN.

This sequence belongs to the peptidase M14 family. Zn(2+) serves as cofactor.

Its subcellular location is the vacuole. The protein resides in the secreted. Inactive carboxypeptidase that may play a role in cell wall organization and biogenesis. The protein is Inactive metallocarboxypeptidase ECM14 (ECM14) of Ajellomyces capsulatus (strain NAm1 / WU24) (Darling's disease fungus).